We begin with the raw amino-acid sequence, 150 residues long: Deoxyuridine 5'-triphosphate nucleotidohydrolase (150 aa).

Residues 69–71 (RSG), asparagine 82, 86–88 (LID), and methionine 96 each bind substrate.

The protein belongs to the dUTPase family. The cofactor is Mg(2+).

The catalysed reaction is dUTP + H2O = dUMP + diphosphate + H(+). It participates in pyrimidine metabolism; dUMP biosynthesis; dUMP from dCTP (dUTP route): step 2/2. This enzyme is involved in nucleotide metabolism: it produces dUMP, the immediate precursor of thymidine nucleotides and it decreases the intracellular concentration of dUTP so that uracil cannot be incorporated into DNA. This Acinetobacter baylyi (strain ATCC 33305 / BD413 / ADP1) protein is Deoxyuridine 5'-triphosphate nucleotidohydrolase.